Reading from the N-terminus, the 334-residue chain is Glutamyl-tRNA reductase (334 aa).

Residues 49–52 (TCNR), serine 107, 112–114 (EDQ), and glutamine 118 contribute to the substrate site. Cysteine 50 functions as the Nucleophile in the catalytic mechanism. Residue 186–191 (GNGEMG) participates in NADP(+) binding.

This sequence belongs to the glutamyl-tRNA reductase family. In terms of assembly, homodimer.

It carries out the reaction (S)-4-amino-5-oxopentanoate + tRNA(Glu) + NADP(+) = L-glutamyl-tRNA(Glu) + NADPH + H(+). It functions in the pathway porphyrin-containing compound metabolism; protoporphyrin-IX biosynthesis; 5-aminolevulinate from L-glutamyl-tRNA(Glu): step 1/2. Its function is as follows. Catalyzes the NADPH-dependent reduction of glutamyl-tRNA(Glu) to glutamate 1-semialdehyde (GSA). The protein is Glutamyl-tRNA reductase of Alkaliphilus oremlandii (strain OhILAs) (Clostridium oremlandii (strain OhILAs)).